The primary structure comprises 977 residues: uncharacterized protein (977 aa).

The N-terminal stretch at 1-24 (MQSNLLKVLGVLAIVATLVCFIFA) is a signal peptide. A disordered region spans residues 125-146 (TESTRPGKSNLDDKGNMIPIPR). 6 helical membrane-spanning segments follow: residues 612 to 632 (IKAI…LGFA), 722 to 742 (LGLS…IVII), 754 to 774 (AFMA…FLLF), 796 to 816 (VVMM…LDFV), 833 to 853 (FIGT…INWF), and 866 to 886 (GVNM…YGYV). A disordered region spans residues 918-977 (KALSPIGMDDKTRQGITGRAEARLKQRNKTLDQAEKNRKNTPKEGGEKTNAEPPQPEARG). The segment covering 937-967 (AEARLKQRNKTLDQAEKNRKNTPKEGGEKTN) has biased composition (basic and acidic residues).

It belongs to the TrbL/VirB6 family.

The protein resides in the cell membrane. This is an uncharacterized protein from Rickettsia felis (strain ATCC VR-1525 / URRWXCal2) (Rickettsia azadi).